Here is a 1171-residue protein sequence, read N- to C-terminus: Pyruvate:ferredoxin oxidoreductase (1171 aa).

Pyruvate contacts are provided by T29 and R112. Residues 424-428 (SDGTV), K456, N556, and N598 each bind CoA. 4Fe-4S ferredoxin-type domains follow at residues 677–706 (NIPQ…PYLA) and 733–764 (FRIQ…MVPL). [4Fe-4S] cluster contacts are provided by C686, C689, C692, C696, C742, C745, C748, C752, C809, and C812. Thiamine diphosphate contacts are provided by residues E814, C837, 967 to 969 (DGW), and 995 to 1000 (TEVYSN). C837 is a binding site for [4Fe-4S] cluster. D967, T995, and V997 together coordinate Mg(2+). Position 1000 (N1000) interacts with pyruvate. C1075 serves as a coordination point for [4Fe-4S] cluster.

This sequence belongs to the pyruvate:ferredoxin/flavodoxin oxidoreductase family. Homodimer. [4Fe-4S] cluster serves as cofactor. It depends on thiamine diphosphate as a cofactor. Mg(2+) is required as a cofactor.

It catalyses the reaction 2 oxidized [2Fe-2S]-[ferredoxin] + pyruvate + CoA = 2 reduced [2Fe-2S]-[ferredoxin] + acetyl-CoA + CO2 + H(+). Catalyzes the oxidative decarboxylation of pyruvate to acetyl-CoA and carbon dioxide. The two electrons that are generated as a result of pyruvate decarboxylation are used in the reduction of low potential ferredoxins, which provide reducing equivalents for central metabolism. Also catalyzes the reverse reaction, i.e. the synthesis of pyruvate from acetyl-CoA and carbon dioxide. Appears to function physiologically in both directions. The oxidation of pyruvate by PFOR is required to connect glycolysis and the Wood-Ljungdahl pathway of reductive acetogenesis. The conversion of acetyl-CoA to pyruvate links the Wood-Ljungdahl pathway of autotrophic CO2 fixation to the reductive tricarboxylic acid cycle. Can use methyl viologen as electron carrier in vitro. This chain is Pyruvate:ferredoxin oxidoreductase, found in Moorella thermoacetica (strain ATCC 39073 / JCM 9320).